Consider the following 332-residue polypeptide: ATPase GET3 (332 aa).

Residue 32–39 (KGGVGKTT) coordinates ATP. Asp61 is a catalytic residue. Residues Glu235 and Asn262 each coordinate ATP. Zn(2+) is bound by residues Cys273 and Cys276.

The protein belongs to the arsA ATPase family. In terms of assembly, homodimer.

The protein localises to the cytoplasm. It is found in the endoplasmic reticulum. In terms of biological role, ATPase required for the post-translational delivery of tail-anchored (TA) proteins to the endoplasmic reticulum. Recognizes and selectively binds the transmembrane domain of TA proteins in the cytosol. This complex then targets to the endoplasmic reticulum by membrane-bound receptors, where the tail-anchored protein is released for insertion. This process is regulated by ATP binding and hydrolysis. ATP binding drives the homodimer towards the closed dimer state, facilitating recognition of newly synthesized TA membrane proteins. ATP hydrolysis is required for insertion. Subsequently, the homodimer reverts towards the open dimer state, lowering its affinity for the membrane-bound receptor, and returning it to the cytosol to initiate a new round of targeting. The polypeptide is ATPase GET3 (Mycosarcoma maydis (Corn smut fungus)).